Reading from the N-terminus, the 396-residue chain is Gap junction gamma-1 protein (396 aa).

Residues 1–22 lie on the Cytoplasmic side of the membrane; the sequence is MSWSFLTRLLEEIHNHSTFVGK. A helical membrane pass occupies residues 23–45; sequence IWLTVLIAFRIALTAVGGESIYY. Topologically, residues 46-75 are extracellular; it reads DEQSKFVCNTEQPGCENVCYDAFAPLSHVR. A helical membrane pass occupies residues 76–95; the sequence is FWVFQIILVATPSVMYLGYA. Topologically, residues 96–175 are cytoplasmic; that stretch reads IHKIAKMEHG…RRIREDGLMK (80 aa). The tract at residues 145–165 is disordered; sequence ELESEKENKEQNQPKPKHDGR. Positions 147–156 are enriched in basic and acidic residues; that stretch reads ESEKENKEQN. A helical transmembrane segment spans residues 176 to 198; sequence IYVLQLLARTVFEVGFLIGQYFL. Topologically, residues 199-228 are extracellular; it reads YGFQVHPFYVCSRLPCPHKIDCFISRPTEK. The chain crosses the membrane as a helical span at residues 229 to 248; that stretch reads TIFLLIMYGVTGLCLLLNIW. Over 249-396 the chain is Cytoplasmic; that stretch reads EMLHLGFGTI…SGDGKNSVWI (148 aa). Residues 355–396 are disordered; the sequence is AYSHQNNPHGPREKKAKVGSKAGSNKSSASSKSGDGKNSVWI. Over residues 373-396 the composition is skewed to low complexity; the sequence is GSKAGSNKSSASSKSGDGKNSVWI.

It belongs to the connexin family. Gamma-type subfamily. In terms of assembly, a connexon is composed of a hexamer of connexins. Interacts with CNST.

The protein resides in the cell membrane. The protein localises to the cell junction. It is found in the gap junction. One gap junction consists of a cluster of closely packed pairs of transmembrane channels, the connexons, through which materials of low MW diffuse from one cell to a neighboring cell. This is Gap junction gamma-1 protein (GJC1) from Canis lupus familiaris (Dog).